Reading from the N-terminus, the 436-residue chain is Transcriptional regulator VdtR (436 aa).

The zn(2)-C6 fungal-type DNA-binding region spans 17–44 (CDRCSANKVKCTQEKPECERCRLLSLPC). 2 disordered regions span residues 51-147 (RIGK…HDKG) and 173-192 (TARE…EYSD). Positions 125 to 141 (SHNSNRPTNMASTNQDQ) are enriched in polar residues. Over residues 174–192 (AREDQKQHPELRSEEEYSD) the composition is skewed to basic and acidic residues.

It localises to the nucleus. Its function is as follows. Transcription factor that regulates expression of the viriditoxin biosynthesis cluster and viriditoxin synthesis. The sequence is that of Transcriptional regulator VdtR from Byssochlamys spectabilis (Paecilomyces variotii).